Consider the following 376-residue polypeptide: N-acetyldiaminopimelate deacetylase (376 aa).

Asp69 is a catalytic residue. The Proton acceptor role is filled by Glu128.

This sequence belongs to the peptidase M20A family. N-acetyldiaminopimelate deacetylase subfamily.

It carries out the reaction N-acetyl-(2S,6S)-2,6-diaminopimelate + H2O = (2S,6S)-2,6-diaminopimelate + acetate. It functions in the pathway amino-acid biosynthesis; L-lysine biosynthesis via DAP pathway; LL-2,6-diaminopimelate from (S)-tetrahydrodipicolinate (acetylase route): step 3/3. In terms of biological role, catalyzes the conversion of N-acetyl-diaminopimelate to diaminopimelate and acetate. This Bacillus cereus (strain G9842) protein is N-acetyldiaminopimelate deacetylase.